A 428-amino-acid polypeptide reads, in one-letter code: Serine--tRNA ligase (428 aa).

233–235 (TAE) contacts L-serine. Residue 264–266 (RRE) participates in ATP binding. L-serine is bound at residue E287. Residue 351 to 354 (EVSS) participates in ATP binding. S387 serves as a coordination point for L-serine.

The protein belongs to the class-II aminoacyl-tRNA synthetase family. Type-1 seryl-tRNA synthetase subfamily. In terms of assembly, homodimer. The tRNA molecule binds across the dimer.

The protein resides in the cytoplasm. It catalyses the reaction tRNA(Ser) + L-serine + ATP = L-seryl-tRNA(Ser) + AMP + diphosphate + H(+). The catalysed reaction is tRNA(Sec) + L-serine + ATP = L-seryl-tRNA(Sec) + AMP + diphosphate + H(+). Its pathway is aminoacyl-tRNA biosynthesis; selenocysteinyl-tRNA(Sec) biosynthesis; L-seryl-tRNA(Sec) from L-serine and tRNA(Sec): step 1/1. Its function is as follows. Catalyzes the attachment of serine to tRNA(Ser). Is also able to aminoacylate tRNA(Sec) with serine, to form the misacylated tRNA L-seryl-tRNA(Sec), which will be further converted into selenocysteinyl-tRNA(Sec). This is Serine--tRNA ligase from Salinibacter ruber (strain DSM 13855 / M31).